The following is a 451-amino-acid chain: uncharacterized protein (451 aa).

Residues 1–451 (MSETENKTTT…KKEAAKNKSK (451 aa)) are disordered. A compositionally biased stretch (low complexity) spans 9–22 (TTETPTTTDSTVTT). Over residues 44-54 (VKNQLSNTRTR) the composition is skewed to polar residues. Positions 73–99 (KLIDTKERKEKKEKKEKEPKEPKEPKE) are enriched in basic and acidic residues. Positions 114–147 (GDEEEDEEKEEDEEQKEEQSQEEDSEESEEEQNS) are enriched in acidic residues. Residues 152-162 (KKKKKQAKKVA) are compositionally biased toward basic residues. Basic and acidic residues-rich tracts occupy residues 163 to 192 (KKET…EKEA), 199 to 210 (STEKKEKEEKPK), and 217 to 230 (KKDQ…KDGD). A compositionally biased stretch (low complexity) spans 232–244 (STTTTATATTTTD). Composition is skewed to basic and acidic residues over residues 284–303 (TEEK…ETKK) and 311–340 (AAAE…DDKP). Positions 341–355 (AATTTTTTAAAATTT) are enriched in low complexity. Residues 356-383 (EEPKEKITKPAADKKKAPANKKAEKDQS) show a composition bias toward basic and acidic residues. Positions 393 to 425 (TTTATTTTTNKDATAPTTTTNKDATAPTTTTTK) are enriched in low complexity. Residues 441–451 (PKKEAAKNKSK) show a composition bias toward basic and acidic residues.

This is an uncharacterized protein from Dictyostelium discoideum (Social amoeba).